Consider the following 74-residue polypeptide: Small ribosomal subunit protein eS28 (74 aa).

The protein belongs to the eukaryotic ribosomal protein eS28 family.

The sequence is that of Small ribosomal subunit protein eS28 from Halobacterium salinarum (strain ATCC 29341 / DSM 671 / R1).